A 123-amino-acid polypeptide reads, in one-letter code: Peptide methionine sulfoxide reductase MsrA (123 aa).

Residue C8 is part of the active site.

It belongs to the MsrA Met sulfoxide reductase family.

It catalyses the reaction L-methionyl-[protein] + [thioredoxin]-disulfide + H2O = L-methionyl-(S)-S-oxide-[protein] + [thioredoxin]-dithiol. The enzyme catalyses [thioredoxin]-disulfide + L-methionine + H2O = L-methionine (S)-S-oxide + [thioredoxin]-dithiol. Functionally, has an important function as a repair enzyme for proteins that have been inactivated by oxidation. Catalyzes the reversible oxidation-reduction of methionine sulfoxide in proteins to methionine. The protein is Peptide methionine sulfoxide reductase MsrA of Thermoactinomyces vulgaris.